Consider the following 147-residue polypeptide: Large ribosomal subunit protein uL13 (147 aa).

The protein belongs to the universal ribosomal protein uL13 family. Part of the 50S ribosomal subunit.

In terms of biological role, this protein is one of the early assembly proteins of the 50S ribosomal subunit, although it is not seen to bind rRNA by itself. It is important during the early stages of 50S assembly. The polypeptide is Large ribosomal subunit protein uL13 (Kineococcus radiotolerans (strain ATCC BAA-149 / DSM 14245 / SRS30216)).